A 227-amino-acid polypeptide reads, in one-letter code: MMNHKFVLLILLIFYCFFLSGCNNSKKTPCSRKHSHKELSKDDPHNLVYKGYYKVGSQYKIKGKTYKPNAPKSFTETGYASWYGGGGDKFHGKKTANGDMFNKNLLTAAHKTLPLPCLVKVTNKTNNKSVILMVNDRGPFKPNRIIDVSAKAAEVLAFKKQGLAKVKIEYLHAETEKFLKNIKVNKSSNKTLAKSSKKPSSTKVANNKCSINCHIKLVNLKYKLAVN.

The N-terminal stretch at 1-21 is a signal peptide; the sequence is MMNHKFVLLILLIFYCFFLSG. The N-palmitoyl cysteine moiety is linked to residue C22. The S-diacylglycerol cysteine moiety is linked to residue C22.

This sequence belongs to the RlpA family.

The protein localises to the cell membrane. Lytic transglycosylase with a strong preference for naked glycan strands that lack stem peptides. This Rickettsia bellii (strain RML369-C) protein is Endolytic peptidoglycan transglycosylase RlpA.